A 357-amino-acid chain; its full sequence is (+)-eremophilene synthase (357 aa).

Residues Asp-100 and Glu-105 each coordinate Mg(2+). Positions 100 to 105 match the DDXXE motif motif; that stretch reads DDDFDE. A substrate-binding site is contributed by Arg-198. Residues Asn-244 and Ser-248 each coordinate Mg(2+). A substrate-binding site is contributed by Lys-251. Asp-252 provides a ligand contact to Mg(2+). 331–332 lines the substrate pocket; it reads RY.

This sequence belongs to the terpene synthase family. The cofactor is Mg(2+).

It catalyses the reaction (2E,6E)-farnesyl diphosphate = (+)-eremophilene + diphosphate. Its pathway is secondary metabolite biosynthesis; terpenoid biosynthesis. Catalyzes the conversion of (2E,6E)-farnesyl diphosphate (FPP) to yield the bicyclic sesquiterpene eremophilene via a 1,10-cyclization, which requires the abstraction of the pyrophosphate from FPP to yield the (E,E)-germacradienyl cation. The only accepted substrate is farnesyl diphosphate (FPP). This is (+)-eremophilene synthase from Gibberella fujikuroi (strain CBS 195.34 / IMI 58289 / NRRL A-6831) (Bakanae and foot rot disease fungus).